Here is a 350-residue protein sequence, read N- to C-terminus: CMP-N-acetylneuraminate-beta-galactosamide-alpha-2,3-sialyltransferase 2 (350 aa).

The Cytoplasmic portion of the chain corresponds to 1–6 (MKCSLR). A helical; Signal-anchor for type II membrane protein transmembrane segment spans residues 7 to 27 (VWFLSMAFLLVFIMSLLFTYS). Residues 28–350 (HHSMATLPYL…ASKIEVYRGN (323 aa)) lie on the Lumenal side of the membrane. 3 cysteine pairs are disulfide-bonded: cysteine 70–cysteine 75, cysteine 72–cysteine 149, and cysteine 152–cysteine 291. Glutamine 116, asparagine 157, and asparagine 180 together coordinate substrate. A glycan (N-linked (GlcNAc...) asparagine) is linked at asparagine 211. Residues tyrosine 240, tyrosine 276, glycine 280, glycine 300, histidine 309, and histidine 326 each contribute to the substrate site.

The protein belongs to the glycosyltransferase 29 family. In terms of assembly, homodimer; disulfide-linked. Homodimer formation occurs in the endoplasmic reticulum. In terms of processing, the soluble form derives from the membrane form by proteolytic processing. Post-translationally, N-glycosylated; necessary for proper exit from endoplasmic reticulum and trafficking to the Golgi apparatus.

Its subcellular location is the golgi apparatus. It is found in the golgi stack membrane. The protein resides in the secreted. It carries out the reaction a beta-D-galactosyl-(1-&gt;3)-N-acetyl-alpha-D-galactosaminyl derivative + CMP-N-acetyl-beta-neuraminate = an N-acetyl-alpha-neuraminyl-(2-&gt;3)-beta-D-galactosyl-(1-&gt;3)-N-acetyl-alpha-D-galactosaminyl derivative + CMP + H(+). The catalysed reaction is a ganglioside GM1 (d18:1(4E)) + CMP-N-acetyl-beta-neuraminate = a ganglioside GD1a (d18:1(4E)) + CMP + H(+). The enzyme catalyses ganglioside GM1 (d18:1(4E)/18:0) + CMP-N-acetyl-beta-neuraminate = ganglioside GD1a (18:1(4E)/18:0) + CMP + H(+). It catalyses the reaction a ganglioside GA1 + CMP-N-acetyl-beta-neuraminate = a ganglioside GM1b + CMP + H(+). It carries out the reaction a ganglioside GA1 (d18:1(4E)) + CMP-N-acetyl-beta-neuraminate = a ganglioside GM1b (d18:1(4E)) + CMP + H(+). The catalysed reaction is a globoside GalGb4Cer + CMP-N-acetyl-beta-neuraminate = a globoside MSGG + CMP + H(+). It functions in the pathway protein modification; protein glycosylation. It participates in glycolipid biosynthesis. Its function is as follows. A beta-galactoside alpha2-3 sialyltransferase primarily involved in terminal sialylation of ganglio and globo series glycolipids. Catalyzes the transfer of sialic acid (N-acetyl-neuraminic acid; Neu5Ac) from the nucleotide sugar donor CMP-Neu5Ac onto acceptor Galbeta-(1-&gt;3)-GalNAc-terminated glycoconjugates through an alpha2-3 linkage. Sialylates GM1/GM1a, GA1/asialo-GM1 gangliosides to form GD1a and GM1b, respectively. Together with ST3GAL3, primarily responsible for biosynthesis of brain gangliosides that function as ligand for myelin-associated glycoprotein MAG on axons, regulating MAG expression and axonal myelin stability and regeneration. Responsible for the sialylation of the pluripotent stem cell- and cancer stem cell-associated antigen SSEA3, forming SSEA4. Sialylates with low efficiency asialofetuin, presumably onto O-glycosidically linked Galbeta-(1-&gt;3)-GalNAc-O-Ser. This is CMP-N-acetylneuraminate-beta-galactosamide-alpha-2,3-sialyltransferase 2 (St3gal2) from Rattus norvegicus (Rat).